The primary structure comprises 1442 residues: MTASDLLTLPQLLAQYSSSAPQNKVFYTTSTKNSHSSFKGLESVATDATHLLNNQDPLNTIKDQLSKDILTTVFTDETTLVKSIHHLYSLPNKLPLVITVDLNLQDYSAIPALKDLSFPILISSDLQTAISNADSSYKIATSSLTPVFHFLNLEKIGTSTAIEQDIDFPTLEIANEETKVALSEATDSLTNFELVKGKESITTVIVNLSPYDAEFSSVLPSNVGLIKIRVYRPWNFSKFLEILPSSVTKIAVLQGVSKKSQSNEFQPFLLDFFGNFNELVSRNIEQVVLTNIGNVNDYGNVINTVISNINKKEPDNNLFLGESNEKAEEQAEVTQLISSVKKVVNLEDAYIKVLKQLFSSNLQILNQFSSETIEPSNPEFGFGRFLKQEAQREELISLAKTSLDPSLYLSEDANKIVQLLSKWLSFNGRDLDEAQLQEANATGLEIFQLLQSNQDSSTVLKFLKIAPTSDSFIFKSSWLIGSDAWSYDLGHSGIQQVLSSRKNINVLLIDSEPYDHRKQNQDRKKDVGLYAMNYYSAYVASVAVYASYTQLLTAIIEASKYNGPSIVLAYLPYNSENDTPLEVLKETKNAVESGYWPLYRFNPVYDDPSTDKEAFSLDSSVIRKQLQDFLDRENKLTLLTRKDPSLSRNLKQSAGDALTRKQEKRSKAAFDQLLEGLSGPPLHVYYASDGGNAANLAKRLAARASARGLKATVLSMDDIILEELPGEENVVFITSTAGQGEFPQDGKSFWEALKNDTDLDLASLNVAVFGLGDSEYWPRKEDKHYFNKPSQDLFKRLELLSAKALIPLGLGDDQDADGFQTAYSEWEPKLWEALGVSGAAVDDEPKPVTNEDIKRESNFLRGTISENLKDTSSGGVTHANEQLMKFHGIYTQDDRDIREIRKSQGLEPYYMFMARARLPGGKTTPQQWLALDHLSDTSGNGTLKLTTRATFQIHGVLKKNLKHTLRGMNAVLMDTLAAAGDVNRNVMVSALPTNAKVHQQIADMGKLISDHFLPKTTAYHEVWLEGPEEQDDDPSWPSIFENRKDGPRKKKTLVSGNALVDIEPIYGPTYLPRKFKFNIAVPPYNDVDVLSIDVGLVAIVNPETQIVEGYNVFVGGGMGTTHNNKKTYPRLGSCLGFVKTEDIIPPLEGIVIVQRDHGDRKDRKHARLKYTVDDMGVEGFKQKVEEYWGKKFEPERPFEFKSNIDYFGWIKDETGLNHFTAFIENGRVEDTPDLPQKTGIRKVAEYMLKTNSGHFRLTGNQHLVISNITDEHVAGIKSILKTYKLDNTDFSGLRLSSSSCVGLPTCGLAFAESERFLPDIITQLEDCLEEYGLRHDSIIMRMTGCPNGCSRPWLGELALVGKAPHTYNLMLGGGYLGQRLNKLYKANVKDEEIVDYIKPLFKRYALEREEGEHFGDFCIRVGIIKPTTEGKYFHEDVSEDAY.

The Flavodoxin-like domain maps to 682 to 831 (LHVYYASDGG…AYSEWEPKLW (150 aa)). Ser903 is subject to Phosphoserine. The [4Fe-4S] cluster site is built by Cys1300, Cys1306, Cys1345, and Cys1349. Cys1349 is a binding site for siroheme.

Belongs to the nitrite and sulfite reductase 4Fe-4S domain family. Alpha(2)-beta(2). The alpha component is a flavoprotein, the beta component is a hemoprotein. It depends on siroheme as a cofactor. [4Fe-4S] cluster is required as a cofactor.

The protein localises to the cytoplasm. The catalysed reaction is hydrogen sulfide + 3 NADP(+) + 3 H2O = sulfite + 3 NADPH + 4 H(+). It participates in sulfur metabolism; hydrogen sulfide biosynthesis; hydrogen sulfide from sulfite (NADPH route): step 1/1. Functionally, catalyzes the reduction of sulfite to sulfide, one of several activities required for the biosynthesis of L-cysteine from sulfate. The chain is Sulfite reductase [NADPH] subunit beta (MET5) from Saccharomyces cerevisiae (strain ATCC 204508 / S288c) (Baker's yeast).